Consider the following 293-residue polypeptide: Forkhead box protein N5 (293 aa).

The interval 104–152 is disordered; the sequence is TSPPLQLQRQLSNDYSTVEDSEDEAPTSCSDVLTDDDDSYNPWQPKHKR. A compositionally biased stretch (polar residues) spans 106 to 119; it reads PPLQLQRQLSNDYS. Residues 176-273 constitute a DNA-binding region (fork-head); it reads RPPLNYCNLI…NEMHALSDDL (98 aa).

Its subcellular location is the nucleus. The polypeptide is Forkhead box protein N5 (Xenopus tropicalis (Western clawed frog)).